A 103-amino-acid chain; its full sequence is ATP-dependent Clp protease adapter protein ClpS 1 (103 aa).

This sequence belongs to the ClpS family. As to quaternary structure, binds to the N-terminal domain of the chaperone ClpA.

Involved in the modulation of the specificity of the ClpAP-mediated ATP-dependent protein degradation. This Rhodopseudomonas palustris (strain ATCC BAA-98 / CGA009) protein is ATP-dependent Clp protease adapter protein ClpS 1.